Consider the following 1623-residue polypeptide: ATP-binding cassette sub-family A member 9 (1623 aa).

Residues 31–51 (LLEWLFSLLLILFVYQLSSNL) form a helical membrane-spanning segment. N-linked (GlcNAc...) asparagine glycosylation occurs at N120. A run of 6 helical transmembrane segments spans residues 225–245 (FFIFFCVISFSSLIYYLSVNI), 265–285 (AFWLSWSLMYAGFILVVAVLM), 295–315 (VVLTGFMVVFLLFLFYGLSLI), 329–349 (FLTGLAIFILTVFWGSLGFTA), 354–374 (LPAFVEWTLCFLSPFAFTTGM), and 398–418 (LIMATLFMLVLDALLYLVLAL). In terms of domain architecture, ABC transporter 1 spans 481–716 (IRIKNLKKEY…WGIGYHLSLH (236 aa)). 517 to 524 (GHSGAGKT) is a binding site for ATP. The next 7 helical transmembrane spans lie at 863 to 883 (LMTVLLLFGISFVPQLLEHLV), 1025 to 1045 (AFFWIPVAASLTPYIAMGSIS), 1071 to 1091 (LVDIPIYFLILFLMQIMDSVF), 1107 to 1127 (IPCSIGYASSLIFMTYVISFI), 1135 to 1155 (SGIWSFFFLIVTIFFIIATDI), 1163 to 1183 (LLICTFLVPPFTLIGSLLIFS), and 1199 to 1219 (QLVFLALLIPYLHFLLFFFIL). In terms of domain architecture, ABC transporter 2 spans 1287–1520 (LRKEYIGRTK…FGKDYLLEMK (234 aa)). 1325 to 1332 (GHNGAGKS) contacts ATP.

Belongs to the ABC transporter superfamily. ABCA family. In terms of tissue distribution, highly expressed in heart and to lower extent in kidney, brain and spleen. Weakly expressed in developing and adult brains. Weakly expressed in the cerebellar granular layer at P14 and P21.

It is found in the membrane. Transporter that may play a role in monocyte differentiation and lipid transport and homeostasis. The protein is ATP-binding cassette sub-family A member 9 (Abca9) of Mus musculus (Mouse).